We begin with the raw amino-acid sequence, 309 residues long: Sulfate adenylyltransferase subunit 2 (309 aa).

It belongs to the PAPS reductase family. CysD subfamily. Heterodimer composed of CysD, the smaller subunit, and CysN.

The catalysed reaction is sulfate + ATP + H(+) = adenosine 5'-phosphosulfate + diphosphate. Its pathway is sulfur metabolism; hydrogen sulfide biosynthesis; sulfite from sulfate: step 1/3. In terms of biological role, with CysN forms the ATP sulfurylase (ATPS) that catalyzes the adenylation of sulfate producing adenosine 5'-phosphosulfate (APS) and diphosphate, the first enzymatic step in sulfur assimilation pathway. APS synthesis involves the formation of a high-energy phosphoric-sulfuric acid anhydride bond driven by GTP hydrolysis by CysN coupled to ATP hydrolysis by CysD. The sequence is that of Sulfate adenylyltransferase subunit 2 from Mycolicibacterium vanbaalenii (strain DSM 7251 / JCM 13017 / BCRC 16820 / KCTC 9966 / NRRL B-24157 / PYR-1) (Mycobacterium vanbaalenii).